The sequence spans 620 residues: MKEYRLTDWLPTTKKEVELRGWDELDVILFSGDAYVDHPSFGAAVIGRILEAEGLKVAIIPQPNWRDDLRDFRKLGRPRLFFGISAGSMDSMVNKYTANKRLRSEDAYTPDGRPDMRPEYPSIVYSQILKRLYPDVPVILGSIEASLRRLSHYDYWQDKVQKSILCDSGADLLIYGMGEKPIVELTRKMKELLPAEDASLTAGELKKIAGTIPQTAYLCRATEWTPAADDIQLYSHEECLADKKKQASNFRHIEEESNKYAASRITQEVDNKVVVVNPPYPPMSQEELDHSYDLPYTRLPHPKYKGKRIPAYDMIKFSVNIHRGCFGGCAFCTISAHQGKFIVSRSKKSILNEVKEVMQLPDFKGYLSDLGGPSANMYQMKGKDEAICKKCKRPSCIHPKVCPNLNSDHCPLLDIYKAVDAIPGIKKSFIGSGVRYDLLLHQSKDAATNRSTAEYTRELIVNHVSGRLKVAPEHTSDRVLSIMRKPSFEQFETFKKIFDRINREENLRQQLIPYFISSHPGCKEEDMAELAVITKRLDFHLEQVQDFTPTPMTVATEAWYSGFHPYTLEPVFSAKTQREKLAQRQFFFWYKPEERKNILNELRRIGRQDLIDKLYGKRNK.

Residues 311–591 (AYDMIKFSVN…AQRQFFFWYK (281 aa)) enclose the Radical SAM core domain. Residues Cys325, Cys329, and Cys332 each contribute to the [4Fe-4S] cluster site.

The protein belongs to the UPF0313 family. [4Fe-4S] cluster serves as cofactor.

This Bacteroides thetaiotaomicron (strain ATCC 29148 / DSM 2079 / JCM 5827 / CCUG 10774 / NCTC 10582 / VPI-5482 / E50) protein is UPF0313 protein BT_0254.